Here is a 644-residue protein sequence, read N- to C-terminus: MSFSITLPDGSKKDFEESLTIADLAQNIATSLGKAAVAGKVNGELKPLDYKLDSDSEVAIITNKDEEGLDVLRATAAFVFEAVAKCEYPELRLGEHVADEGGFYVDTDKDDQIKVGELPKLEKAMQKVIKNGEKIEHVQIAKSELEELYKNDKFKSELLAKVEGDTVDAYKLGDFVDFGFDALLPNTGKIKQFKLLSVAGAYWLGKSSNPMLQRIFGTAFFKEADLKADLKRRQEIKERDHRTIGRDLDLFFVDPKVGAGLPYWMPKGATIRRAVERYIIDREVADGYQHVYTPVLMNLDAYKTSGHWAHYRDDMFPPMDMGDGEMLELRPMNCPSHIQIFKHHIRSYRDLPLRVAELGMMHRYEKSGALSGLQRVREMTLNDGHTFVALDQVQTEFAKILKLIMEVYKDFDITDYYFRLSYRDPKNTDKYFANDEMWEKSQKMLKGAMDDLGLDYVEAEGEAAFYGPKLDIQTKTALGNDETMSTIQLDFMLPDRFGLTYVGKDGEEHRPVMIHRGIVGTMERFIAYLTEIYKGAFPTWLAPVQAEIIPVNNEAHGEYAEKVRAELAKRGFRVEVDDRNEKMGYKIRESQTQKVPYTLVLGDEEMKSGKVNLRRYGTDEEISKSLDDFINEIDADVKSYSREN.

The TGS domain occupies 1–62 (MSFSITLPDG…DSDSEVAIIT (62 aa)). Positions 240 to 538 (DHRTIGRDLD…LTEIYKGAFP (299 aa)) are catalytic. Residues Cys-334, His-385, and His-515 each contribute to the Zn(2+) site.

Belongs to the class-II aminoacyl-tRNA synthetase family. Homodimer. The cofactor is Zn(2+).

It localises to the cytoplasm. The catalysed reaction is tRNA(Thr) + L-threonine + ATP = L-threonyl-tRNA(Thr) + AMP + diphosphate + H(+). Its function is as follows. Catalyzes the attachment of threonine to tRNA(Thr) in a two-step reaction: L-threonine is first activated by ATP to form Thr-AMP and then transferred to the acceptor end of tRNA(Thr). Also edits incorrectly charged L-seryl-tRNA(Thr). The polypeptide is Threonine--tRNA ligase (Lactobacillus helveticus (strain DPC 4571)).